The primary structure comprises 56 residues: Large ribosomal subunit protein bL32 (56 aa).

The tract at residues 1-56 (MAVQQNRKTRSKRGMRRSHDALSAPTLSQDKETGTTHRRHHVAPDGFYRGRKVVDV) is disordered. Over residues 7–16 (RKTRSKRGMR) the composition is skewed to basic residues.

It belongs to the bacterial ribosomal protein bL32 family.

In Chromohalobacter salexigens (strain ATCC BAA-138 / DSM 3043 / CIP 106854 / NCIMB 13768 / 1H11), this protein is Large ribosomal subunit protein bL32.